The following is a 257-amino-acid chain: Pyridoxine 5'-phosphate synthase (257 aa).

3-amino-2-oxopropyl phosphate is bound at residue N6. Residue 8-9 (DH) participates in 1-deoxy-D-xylulose 5-phosphate binding. R17 contacts 3-amino-2-oxopropyl phosphate. Catalysis depends on H41, which acts as the Proton acceptor. 2 residues coordinate 1-deoxy-D-xylulose 5-phosphate: R43 and H48. E68 serves as the catalytic Proton acceptor. Residue T98 participates in 1-deoxy-D-xylulose 5-phosphate binding. Residue H210 is the Proton donor of the active site. 3-amino-2-oxopropyl phosphate contacts are provided by residues G211 and 232–233 (GQ).

Belongs to the PNP synthase family. As to quaternary structure, homooctamer; tetramer of dimers.

It localises to the cytoplasm. The enzyme catalyses 3-amino-2-oxopropyl phosphate + 1-deoxy-D-xylulose 5-phosphate = pyridoxine 5'-phosphate + phosphate + 2 H2O + H(+). It functions in the pathway cofactor biosynthesis; pyridoxine 5'-phosphate biosynthesis; pyridoxine 5'-phosphate from D-erythrose 4-phosphate: step 5/5. Its function is as follows. Catalyzes the complicated ring closure reaction between the two acyclic compounds 1-deoxy-D-xylulose-5-phosphate (DXP) and 3-amino-2-oxopropyl phosphate (1-amino-acetone-3-phosphate or AAP) to form pyridoxine 5'-phosphate (PNP) and inorganic phosphate. This Campylobacter jejuni subsp. doylei (strain ATCC BAA-1458 / RM4099 / 269.97) protein is Pyridoxine 5'-phosphate synthase.